Reading from the N-terminus, the 189-residue chain is Peptidyl-tRNA hydrolase (189 aa).

A tRNA-binding site is contributed by Tyr-15. His-20 acts as the Proton acceptor in catalysis. 3 residues coordinate tRNA: Phe-66, Asn-68, and Asn-114.

It belongs to the PTH family. In terms of assembly, monomer.

The protein localises to the cytoplasm. The catalysed reaction is an N-acyl-L-alpha-aminoacyl-tRNA + H2O = an N-acyl-L-amino acid + a tRNA + H(+). Functionally, hydrolyzes ribosome-free peptidyl-tRNAs (with 1 or more amino acids incorporated), which drop off the ribosome during protein synthesis, or as a result of ribosome stalling. Catalyzes the release of premature peptidyl moieties from peptidyl-tRNA molecules trapped in stalled 50S ribosomal subunits, and thus maintains levels of free tRNAs and 50S ribosomes. The sequence is that of Peptidyl-tRNA hydrolase from Streptococcus mutans serotype c (strain ATCC 700610 / UA159).